The sequence spans 130 residues: Small ribosomal subunit protein uS9 (130 aa).

Belongs to the universal ribosomal protein uS9 family.

In Bordetella parapertussis (strain 12822 / ATCC BAA-587 / NCTC 13253), this protein is Small ribosomal subunit protein uS9.